The chain runs to 410 residues: Serine/threonine transporter SstT (410 aa).

The next 10 membrane-spanning stretches (helical) occupy residues 15–35, 49–69, 82–102, 118–138, 142–162, 190–210, 217–237, 299–319, 331–351, and 358–378; these read GSLVTQIMVGLVAGIALAWLS, FVNALKAVAPLLVLVLVISSI, PIVMLYLLSTFFAAVVAVVAS, IVPPSGILEVLHGLLMSMVTN, AVMKANYIGILVWAIGLGFAF, FAPVGIFGLVASILASTGFDA, LLGLLLGCMLLMALVFNPLLV, MAGASITITVLTLAAVHTLGI, LVASVCACGASGVAGGSLLLI, and FGIPNEIAMQVVAVGFIIGVL.

The protein belongs to the dicarboxylate/amino acid:cation symporter (DAACS) (TC 2.A.23) family.

The protein resides in the cell inner membrane. It catalyses the reaction L-serine(in) + Na(+)(in) = L-serine(out) + Na(+)(out). The enzyme catalyses L-threonine(in) + Na(+)(in) = L-threonine(out) + Na(+)(out). Involved in the import of serine and threonine into the cell, with the concomitant import of sodium (symport system). This Erwinia tasmaniensis (strain DSM 17950 / CFBP 7177 / CIP 109463 / NCPPB 4357 / Et1/99) protein is Serine/threonine transporter SstT.